The primary structure comprises 476 residues: Inner membrane transporter YcaM (476 aa).

Topologically, residues 1–9 are cytoplasmic; sequence MAGNVQEKQ. The chain crosses the membrane as a helical span at residues 10–30; it reads LRWYNIALMSFITVWGFGNVV. Topologically, residues 31–38 are periplasmic; it reads NNYANQGL. The helical transmembrane segment at 39–59 threads the bilayer; that stretch reads VVVFSWVFIFALYFTPYALIV. Residues 60 to 80 lie on the Cytoplasmic side of the membrane; it reads GQLGSTFKDGKGGVSTWIKHT. Residues 81–101 traverse the membrane as a helical segment; the sequence is MGPGLAYLAAWTYWVVHIPYL. At 102 to 125 the chain is on the periplasmic side; it reads AQKPQAILIALGWAMKGDGSLIKE. The chain crosses the membrane as a helical span at residues 126–146; it reads YSVVALQGLTLVLFIFFMWVA. Residues 147–154 are Cytoplasmic-facing; the sequence is SRGMKSLK. Residues 155 to 175 traverse the membrane as a helical segment; sequence IVGSVAGIAMFVMSLLYVAMA. Residues 176 to 195 are Periplasmic-facing; it reads VTAPAITEVHIATTNITWET. A helical membrane pass occupies residues 196–216; that stretch reads FIPHIDFTYITTISMLVFAVG. The Cytoplasmic segment spans residues 217 to 240; the sequence is GAEKISPYVNQTRNPGKEFPKGML. Residues 241 to 261 traverse the membrane as a helical segment; that stretch reads CLAVMVAVCAILGSLAMGMMF. Over 262-291 the chain is Periplasmic; the sequence is DSRNIPDDLMTNGQYYAFQKLGEYYNMGNT. A helical membrane pass occupies residues 292–312; it reads LMVIYAIANTLGQVAALVFSI. Over 313 to 343 the chain is Cytoplasmic; the sequence is DAPLKVLLGDADSKYIPASLCRTNASGTPVN. Residues 344–364 form a helical membrane-spanning segment; sequence GYFLTLVLVAILIMLPTLGIG. Topologically, residues 365–375 are periplasmic; it reads DMNNLYKWLLN. The chain crosses the membrane as a helical span at residues 376–396; it reads LNSVVMPLRYLWVFVAFIAVV. Residues 397–414 are Cytoplasmic-facing; that stretch reads RLAQKYKPEYVFIRNKPL. The helical transmembrane segment at 415 to 435 threads the bilayer; sequence AMTVGIWCFAFTAFACLTGIF. The Periplasmic portion of the chain corresponds to 436–448; that stretch reads PKMEAFTAEWTFQ. Residues 449–469 traverse the membrane as a helical segment; sequence LALNVATPFVLVGLGLIFPLL. Over 470–476 the chain is Cytoplasmic; that stretch reads ARKANSK.

The protein belongs to the amino acid-polyamine-organocation (APC) superfamily.

The protein localises to the cell inner membrane. The sequence is that of Inner membrane transporter YcaM (ycaM) from Escherichia coli (strain K12).